The chain runs to 610 residues: UvrABC system protein C (610 aa).

A GIY-YIG domain is found at 16–94; that stretch reads HQPGVYRMYN…IKQYLPKYNV (79 aa). The region spanning 204-239 is the UVR domain; the sequence is NQVLELLVQKMEIASQQLKFEDAAKFRDQIQAIRRV.

It belongs to the UvrC family. As to quaternary structure, interacts with UvrB in an incision complex.

The protein resides in the cytoplasm. Its function is as follows. The UvrABC repair system catalyzes the recognition and processing of DNA lesions. UvrC both incises the 5' and 3' sides of the lesion. The N-terminal half is responsible for the 3' incision and the C-terminal half is responsible for the 5' incision. The chain is UvrABC system protein C from Vibrio vulnificus (strain CMCP6).